A 216-amino-acid polypeptide reads, in one-letter code: MGTSLWLQPPRNSPIWQQLATTIQGLKPIFSDSENFEPHITLTSNISVNTQGQVDFVLDRAVAAAKCVPQGFQIHLSSVKYGSRFFKKVYLQVEPTPELLSLARICREDFVYMPEAMSQARNYQAMSAEERQKIDTQVGQRAAEWTRNEYDPHVSLVYSDLYPVEDADRRTIETRLEDTFGSGYDESGLGWKNGRFALVRCEGPVDEWEVLGVRDF.

H39 (proton donor/acceptor) is an active-site residue. Position 41 (T41) interacts with substrate. The active-site Proton donor/acceptor is H153. Residues S155 and Y158 each coordinate substrate.

This sequence belongs to the 2H phosphoesterase superfamily. CPD1 family.

It is found in the golgi apparatus. It carries out the reaction a nucleoside 2',3'-cyclic phosphate + H2O = a nucleoside 2'-phosphate + H(+). Functionally, involved in the metabolism of ADP-ribose 1',2'-cyclic phosphate which is produced as a consequence of tRNA splicing. The sequence is that of 2',3'-cyclic-nucleotide 3'-phosphodiesterase (CPD1) from Yarrowia lipolytica (strain CLIB 122 / E 150) (Yeast).